The following is a 274-amino-acid chain: NH(3)-dependent NAD(+) synthetase (274 aa).

Residue 46 to 53 (GISGGQDS) participates in ATP binding. Aspartate 52 provides a ligand contact to Mg(2+). Arginine 140 lines the deamido-NAD(+) pocket. Threonine 160 contacts ATP. A Mg(2+)-binding site is contributed by glutamate 165. Deamido-NAD(+)-binding residues include lysine 173 and aspartate 180. ATP-binding residues include lysine 189 and threonine 211. 260-261 (HK) contacts deamido-NAD(+).

It belongs to the NAD synthetase family. In terms of assembly, homodimer.

It catalyses the reaction deamido-NAD(+) + NH4(+) + ATP = AMP + diphosphate + NAD(+) + H(+). The protein operates within cofactor biosynthesis; NAD(+) biosynthesis; NAD(+) from deamido-NAD(+) (ammonia route): step 1/1. Functionally, catalyzes the ATP-dependent amidation of deamido-NAD to form NAD. Uses ammonia as a nitrogen source. The protein is NH(3)-dependent NAD(+) synthetase of Streptococcus pneumoniae serotype 19F (strain G54).